Reading from the N-terminus, the 334-residue chain is DNA-directed RNA polymerase subunit alpha (334 aa).

Positions 1–234 (MQTKVNELLK…SQLAAFVELQ (234 aa)) are alpha N-terminal domain (alpha-NTD). The tract at residues 248–334 (IDPILLRPVD…LKDQDKKASG (87 aa)) is alpha C-terminal domain (alpha-CTD).

It belongs to the RNA polymerase alpha chain family. Homodimer. The RNAP catalytic core consists of 2 alpha, 1 beta, 1 beta' and 1 omega subunit. When a sigma factor is associated with the core the holoenzyme is formed, which can initiate transcription.

The catalysed reaction is RNA(n) + a ribonucleoside 5'-triphosphate = RNA(n+1) + diphosphate. In terms of biological role, DNA-dependent RNA polymerase catalyzes the transcription of DNA into RNA using the four ribonucleoside triphosphates as substrates. The polypeptide is DNA-directed RNA polymerase subunit alpha (Thioalkalivibrio sulfidiphilus (strain HL-EbGR7)).